The chain runs to 73 residues: Mu-scoloptoxin(15)-Ssd1a (73 aa).

A signal peptide spans 1-20 (MKFHIIFCLLAALMMTSAFA).

Post-translationally, contains 2 disulfide bonds. Expressed by the venom gland.

Its subcellular location is the secreted. Voltage-gated sodium channel inhibitor. The chain is Mu-scoloptoxin(15)-Ssd1a from Scolopendra dehaani (Thai centipede).